We begin with the raw amino-acid sequence, 91 residues long: Small ribosomal subunit protein uS19 (91 aa).

The tract at residues 72–91 (GEFSPTRKFGGHGDDKKKKK) is disordered. Positions 82 to 91 (GHGDDKKKKK) are enriched in basic and acidic residues.

Belongs to the universal ribosomal protein uS19 family.

Functionally, protein S19 forms a complex with S13 that binds strongly to the 16S ribosomal RNA. The sequence is that of Small ribosomal subunit protein uS19 from Spiroplasma kunkelii.